The following is a 206-amino-acid chain: Glutathione S-transferase 1 (206 aa).

Positions 2–79 constitute a GST N-terminal domain; the sequence is PQYKLTYFDI…YLGRQFGLAG (78 aa). Residues Tyr-8, Trp-39, Lys-43, 49 to 51, and 63 to 64 each bind glutathione; these read GQL and QS. Residues 81–206 enclose the GST C-terminal domain; the sequence is TPMEEAQVDS…WIAERPKTPY (126 aa).

Belongs to the GST superfamily. Sigma family.

The enzyme catalyses RX + glutathione = an S-substituted glutathione + a halide anion + H(+). In terms of biological role, conjugation of reduced glutathione to a wide number of exogenous and endogenous hydrophobic electrophiles. Can also function as a GSH peroxidase. The polypeptide is Glutathione S-transferase 1 (GST1) (Ascaris suum (Pig roundworm)).